The chain runs to 301 residues: Glutamyl-Q tRNA(Asp) synthetase (301 aa).

L-glutamate contacts are provided by residues 9 to 13 (RFAPS) and Glu45. Residues 12–22 (PSPTGPLHLGS) carry the 'HIGH' region motif. Positions 101, 103, 121, and 125 each coordinate Zn(2+). Residues Tyr179 and Arg197 each coordinate L-glutamate. The short motif at 235–239 (KLSKQ) is the 'KMSKS' region element. ATP is bound at residue Lys238.

Belongs to the class-I aminoacyl-tRNA synthetase family. GluQ subfamily. Zn(2+) serves as cofactor.

Its function is as follows. Catalyzes the tRNA-independent activation of glutamate in presence of ATP and the subsequent transfer of glutamate onto a tRNA(Asp). Glutamate is transferred on the 2-amino-5-(4,5-dihydroxy-2-cyclopenten-1-yl) moiety of the queuosine in the wobble position of the QUC anticodon. The polypeptide is Glutamyl-Q tRNA(Asp) synthetase (Thiobacillus denitrificans (strain ATCC 25259 / T1)).